Reading from the N-terminus, the 391-residue chain is MDLEKNYPTPRTSRTGHGGVNQLGGVFVNGRPLPDVVRQRIVELAHQGVRPCDISRQLRVSHGCVSKILGRYYETGSIKPGVIGGSKPKVATPKVVEKIAEYKRQNPTMFAWEIRDRLLAERVCDNDTVPSVSSINRIIRTKVQQPPNQPVPASSHSIVSTGSVTQVSSVSTDSAGSSYSISGILGITSPSADTNKRKRDEGIQESPVPNGHSLPGRDFLRKQMRGDLFTQQQLEVLDRVFERQHYSDIFTTTEPIKPEQTTEYSAMASLAGGLDDMKANLASPTPADIGSSVPGPQSYPIVTGRDLASTTLPGYPPHVPPAGQGSYSAPTLTGMVPGSEFSGSPYSHPQYSSYNDSWRFPNPGLLGSPYYYSAAARGAAPPAAATAYDRH.

Residues 1-21 (MDLEKNYPTPRTSRTGHGGVN) are disordered. The segment at residues 16 to 142 (GHGGVNQLGG…SSINRIIRTK (127 aa)) is a DNA-binding region (paired). The tract at residues 19–75 (GVNQLGGVFVNGRPLPDVVRQRIVELAHQGVRPCDISRQLRVSHGCVSKILGRYYET) is PAI subdomain. The RED subdomain stretch occupies residues 94–142 (KVVEKIAEYKRQNPTMFAWEIRDRLLAERVCDNDTVPSVSSINRIIRTK). Positions 182–218 (SGILGITSPSADTNKRKRDEGIQESPVPNGHSLPGRD) are disordered.

As to quaternary structure, interacts with ETS1; this interaction alters PAX5 DNA-binding properties. Binds DNA as a monomer. Interacts with TBP; this interaction allows PAX5 to interact with the basal transcription machinery. Interacts with RB1. Interacts with TLE4. Interacts with DAXX. (Microbial infection) Interacts (via N-terminus) with Epstein-Barr virus protein BZLF1 (via C-terminus); this interaction inhibits BZLF1-mediated lytic viral reactivation. Interacts also with EBNA1; this interaction promotes EBNA1-dependent transcription. In terms of processing, O-glycosylated. Post-translationally, phosphorylated by SYK. This phosphorylation plays an important role in the abolition of BLIMP1 repression by PAX5 in order to trigger plasma cell differentiation.

The protein resides in the nucleus. Transcription factor that plays an essential role in commitment of lymphoid progenitors to the B-lymphocyte lineage. Fulfills a dual role by repressing B-lineage inappropriate genes and simultaneously activating B-lineage-specific genes. In turn, regulates cell adhesion and migration, induces V(H)-to-D(H)J(H) recombination, facilitates pre-B-cell receptor signaling and promotes development to the mature B-cell stage. Repression of the cohesin-release factor WAPL causes global changes of the chromosomal architecture in pro-B cells to facilitate the generation of a diverse antibody repertoire. Its function is as follows. (Microbial infection) Plays an essential role in the maintenance of Epstein-Barr virus genome copy number within the host cell by promoting EBNA1/oriP-dependent binding and transcription. Also participates in the inhibition of lytic EBV reactivation by modulating viral BZLF1 activity. The chain is Paired box protein Pax-5 (PAX5) from Homo sapiens (Human).